We begin with the raw amino-acid sequence, 131 residues long: Small ribosomal subunit protein uS9 (131 aa).

The protein belongs to the universal ribosomal protein uS9 family.

This Glaesserella parasuis serovar 5 (strain SH0165) (Haemophilus parasuis) protein is Small ribosomal subunit protein uS9.